We begin with the raw amino-acid sequence, 337 residues long: Anthranilate phosphoribosyltransferase (337 aa).

Residues G80, 83 to 84, T88, 90 to 93, 108 to 116, and S120 each bind 5-phospho-alpha-D-ribose 1-diphosphate; these read GD, NIST, and KHGNRAVSS. G80 is a binding site for anthranilate. Position 92 (S92) interacts with Mg(2+). Anthranilate is bound at residue N111. Residue R166 coordinates anthranilate. Residues D224 and E225 each coordinate Mg(2+).

The protein belongs to the anthranilate phosphoribosyltransferase family. In terms of assembly, homodimer. Mg(2+) is required as a cofactor.

The enzyme catalyses N-(5-phospho-beta-D-ribosyl)anthranilate + diphosphate = 5-phospho-alpha-D-ribose 1-diphosphate + anthranilate. Its pathway is amino-acid biosynthesis; L-tryptophan biosynthesis; L-tryptophan from chorismate: step 2/5. Functionally, catalyzes the transfer of the phosphoribosyl group of 5-phosphorylribose-1-pyrophosphate (PRPP) to anthranilate to yield N-(5'-phosphoribosyl)-anthranilate (PRA). The sequence is that of Anthranilate phosphoribosyltransferase from Anaeromyxobacter dehalogenans (strain 2CP-1 / ATCC BAA-258).